The chain runs to 1226 residues: Methionine synthase (1226 aa).

A Hcy-binding domain is found at 6–326 (RQQLEQQLKQ…EHIAAIAKAV (321 aa)). Residues cysteine 248, cysteine 311, and cysteine 312 each contribute to the Zn(2+) site. Positions 357–618 (FVNVGERTNV…VPLKLREAVE (262 aa)) constitute a Pterin-binding domain. The region spanning 651-745 (SALEWRAWPV…FINAQKSGST (95 aa)) is the B12-binding N-terminal domain. Methylcob(III)alamin contacts are provided by residues glutamate 695, 757 to 761 (GDVHD), histidine 760, serine 805, threonine 809, and alanine 861. Residues 747–882 (NGKILLATVK…SDEQRPGFIE (136 aa)) form the B12-binding domain. The AdoMet activation domain maps to 898–1226 (KTPKSRPVTL…EKWLAPNLDA (329 aa)). Residues aspartate 948, arginine 1136, and 1191–1192 (YF) contribute to the S-adenosyl-L-methionine site.

The protein belongs to the vitamin-B12 dependent methionine synthase family. Methylcob(III)alamin is required as a cofactor. The cofactor is Zn(2+).

The enzyme catalyses (6S)-5-methyl-5,6,7,8-tetrahydrofolate + L-homocysteine = (6S)-5,6,7,8-tetrahydrofolate + L-methionine. Its pathway is amino-acid biosynthesis; L-methionine biosynthesis via de novo pathway; L-methionine from L-homocysteine (MetH route): step 1/1. Functionally, catalyzes the transfer of a methyl group from methyl-cobalamin to homocysteine, yielding enzyme-bound cob(I)alamin and methionine. Subsequently, remethylates the cofactor using methyltetrahydrofolate. This Vibrio cholerae serotype O1 (strain ATCC 39315 / El Tor Inaba N16961) protein is Methionine synthase (metH).